A 149-amino-acid chain; its full sequence is Nascent polypeptide-associated complex subunit beta-2 (149 aa).

Residues 38-103 (DKDNTKLQAE…PKENTLNGLY (66 aa)) enclose the NAC-A/B domain.

Belongs to the NAC-beta family. In terms of assembly, part of the nascent polypeptide-associated complex (NAC), consisting of EGD2 and either EGD1 or BTT1. NAC associates with ribosomes via EGD1 or BTT1.

It is found in the cytoplasm. It localises to the nucleus. In terms of biological role, acts as a component of the nascent polypeptide-associated complex (NAC), which promotes mitochondrial protein import by enhancing productive ribosome interactions with the outer mitochondrial membrane. Also blocks the inappropriate interaction of ribosomes translating non-secretory nascent polypeptides with translocation sites in the membrane of the endoplasmic reticulum. BTT1 may act as a transcription factor that exert a negative effect on the expression of several genes that are transcribed by RNA polymerase II. The chain is Nascent polypeptide-associated complex subunit beta-2 (BTT1) from Saccharomyces cerevisiae (strain ATCC 204508 / S288c) (Baker's yeast).